Here is a 415-residue protein sequence, read N- to C-terminus: MPAILSRVAPRTFNLVGSRLMASAARLETVPREEIHKEYDRKKTFYHRDLEIQLAGPTQLKTKPLDPTKLKFGHTYADYMMTCDWDAERGWHHPKIEPIGELKIHPGAKVLHYASELFEGMKAYRGIDNKIRMFRPEMNMARMKRTALRAALPDFDSEEMINVLTELLRLDQEWVPNSDVCSLYLRPTLIGTDPTLGVGCATEAKMFVITGPVGAYYSTGFQPVSLLADSRFIRAFPGGVGAYKMGCNYAPTIWVGKEAASKNCQQVLWLYGENEDLTEVGTMNIFLFWKNEEGDMELITPPLHRGLILPGVTRDSLLELGREWGEYKVTERTLNMEEVKKALSEKRLYEMFGSGTACVVSPVGKILYHNKVTDEYEELHIPTMSSKFGVMQKFYNTINDIQYGRIIKDGWMRDI.

At Lys244 the chain carries N6-(pyridoxal phosphate)lysine.

It belongs to the class-IV pyridoxal-phosphate-dependent aminotransferase family. It depends on pyridoxal 5'-phosphate as a cofactor.

It localises to the cytoplasm. It catalyses the reaction L-leucine + 2-oxoglutarate = 4-methyl-2-oxopentanoate + L-glutamate. The enzyme catalyses L-isoleucine + 2-oxoglutarate = (S)-3-methyl-2-oxopentanoate + L-glutamate. It carries out the reaction L-valine + 2-oxoglutarate = 3-methyl-2-oxobutanoate + L-glutamate. Functionally, catalyzes the first reaction in the catabolism of the essential branched chain amino acids leucine, isoleucine, and valine. This is Branched-chain-amino-acid aminotransferase, cytosolic (bcat-1) from Caenorhabditis elegans.